Consider the following 848-residue polypeptide: F-BAR domain only protein 2 (848 aa).

The F-BAR domain maps to 4 to 250; that stretch reads PYFLENFWGN…NMENTSVESL (247 aa). Residues 87 to 114 are a coiled coil; sequence HMELVRKLQELIKEVQKYVDEQAKNHKK. 2 disordered regions span residues 292-316 and 404-526; these read IPGR…NASN and LSPT…RAES. S405 and S417 each carry phosphoserine. Positions 445–460 are enriched in low complexity; the sequence is PFGPTSTGSSSSLPQS. In terms of domain architecture, MHD spans 580 to 848; sequence ALPIAVAFTE…FATGRYMADC (269 aa).

The protein belongs to the FCHO family. Homodimer.

The protein resides in the membrane. The protein localises to the clathrin-coated pit. Functionally, may function in an early step of clathrin-mediated endocytosis. This is F-BAR domain only protein 2 (fcho2) from Danio rerio (Zebrafish).